A 356-amino-acid chain; its full sequence is Guanine nucleotide-binding protein alpha-17 subunit (356 aa).

The N-myristoyl glycine moiety is linked to residue glycine 2. Residue cysteine 4 is the site of S-palmitoyl cysteine attachment. Residues 32 to 356 (SIVKLLLLGA…QKNLQKAGMM (325 aa)) enclose the G-alpha domain. Residues 35–48 (KLLLLGAGECGKST) are G1 motif. GTP contacts are provided by residues 40–47 (GAGECGKS), 177–183 (LYSRVAT), 202–206 (DVGGQ), 271–274 (NKKD), and alanine 328. Residues serine 47 and threonine 183 each contribute to the Mg(2+) site. A G2 motif region spans residues 175 to 183 (DILYSRVAT). The segment at 198–207 (FRVFDVGGQR) is G3 motif. Residues 267–274 (ILFMNKKD) are G4 motif. The interval 326–331 (TCATDT) is G5 motif.

It belongs to the G-alpha family. G proteins are composed of 3 units; alpha, beta and gamma. The alpha chain contains the guanine nucleotide binding site.

Its subcellular location is the cell projection. The protein localises to the cilium. It is found in the dendrite. Functionally, guanine nucleotide-binding proteins (G proteins) are involved as modulators or transducers in various transmembrane signaling systems. This specific G-alpha subunit plays an important role in olfaction and in cilia morphogenesis. Involved in chemotactic responses to attractants diacetyl, pyrazine, 2,4,5-trimethylthiazole, benzaldehyde, isoamyl alcohol, butanone and 2,3-pentanedione. Displays a redundant function with gpa-3 in chemotactic responses. Involved in avoidance responses to copper, sodium dodecyl sulfate and linoleic acid. Involved in osmotic avoidance and mechanosensory responses. Involved in specifying fan-like morphology of cilia of head sensory neurons AWC. The sequence is that of Guanine nucleotide-binding protein alpha-17 subunit (odr-3) from Caenorhabditis briggsae.